A 195-amino-acid chain; its full sequence is Cysteine/O-acetylserine efflux protein (195 aa).

The Periplasmic segment spans residues 1–7 (MTPTLLS). The helical transmembrane segment at 8–28 (AFWTYTLITAMTPGPNNILAL) threads the bilayer. Topologically, residues 29-46 (SSATSHGFRQSTRVLAGM) are cytoplasmic. A helical membrane pass occupies residues 47–67 (SLGFLIVMLLCAGISFSLAVI). The Periplasmic segment spans residues 68-69 (DP). Residues 70 to 90 (AAVHLLSWAGAAYIVWLAWKI) form a helical membrane-spanning segment. Residues 91–104 (ATSPTKEDGLQAKP) are Cytoplasmic-facing. Residues 105-125 (ISFWASFALQFVNVKIILYGV) traverse the membrane as a helical segment. Topologically, residues 126–141 (TALSTFVLPQTQALSW) are periplasmic. The helical transmembrane segment at 142–162 (VVGVSVLLAMIGTFGNVCWAL) threads the bilayer. Over 163-176 (AGHLFQRLFRQYGR) the chain is Cytoplasmic. Residues 177–194 (QLNIVLALLLVYCAVRIF) traverse the membrane as a helical segment. Tyr195 is a topological domain (periplasmic).

This sequence belongs to the Rht family.

The protein resides in the cell inner membrane. The catalysed reaction is O-acetyl-L-serine(in) = O-acetyl-L-serine(out). The enzyme catalyses L-cysteine(in) = L-cysteine(out). Functionally, exporter of O-acetylserine (OAS) and cysteine. The sequence is that of Cysteine/O-acetylserine efflux protein (eamB) from Escherichia coli O9:H4 (strain HS).